Here is a 569-residue protein sequence, read N- to C-terminus: MLAASIFRPTLLLCWLAAPWPTQPESLFHSRDRSDLEPSPLRQAKPIADLHAAQRFLSRYGWSGVWAAWGPSPEGPPETPKGAALAEAVRRFQRANALPASGELDAATLAAMNRPRCGVPDMRPPPPSAPPSPPGPPPRARSRRSPRAPLSLSRRGWQPRGYPDGGAAQAFSKRTLSWRLLGEALSSQLSVADQRRIVALAFRMWSEVTPLDFREDLAAPGAAVDIKLGFGRGRHLGCPRAFDGSGQEFAHAWRLGDIHFDDDEHFTPPTSDTGISLLKVAVHEIGHVLGLPHTYRTGSIMQPNYIPQEPAFELDWSDRKAIQKLYGSCEGSFDTAFDWIRKERNQYGEVMVRFSTYFFRNSWYWLYENRNNRTRYGDPIQILTGWPGIPTHNIDAFVHIWTWKRDERYFFQGNQYWRYDSDKDQALTEDEQGKSYPKLISEGFPGIPSPLDTAFYDRRQKLIYFFKESLVFAFDVNRNRVLNSYPKRITEVFPAVIPQNHPFRNIDSAYYSYAYNSIFFFKGNAYWKVVNDKDKQQNSWLPANGLFPKKFISEKWFDVCDVHISTLNM.

Positions 1–24 (MLAASIFRPTLLLCWLAAPWPTQP) are cleaved as a signal peptide. A propeptide spanning residues 25 to 144 (ESLFHSRDRS…GPPPRARSRR (120 aa)) is cleaved from the precursor. Positions 115 to 122 (PRCGVPDM) match the Cysteine switch motif. A disordered region spans residues 115–166 (PRCGVPDMRPPPPSAPPSPPGPPPRARSRRSPRAPLSLSRRGWQPRGYPDGG). Zn(2+) is bound at residue Cys117. The segment covering 122–139 (MRPPPPSAPPSPPGPPPR) has biased composition (pro residues). The segment covering 147–156 (RAPLSLSRRG) has biased composition (low complexity). His283 is a Zn(2+) binding site. Glu284 is an active-site residue. Residues His287 and His293 each contribute to the Zn(2+) site. A disulfide bridge connects residues Cys329 and Cys560. Hemopexin repeat units follow at residues 330–389 (EGSF…WPGI), 391–447 (THNI…FPGI), 448–496 (PSPL…FPAV), and 503–559 (FRNI…WFDV). Residue Asn372 is glycosylated (N-linked (GlcNAc...) asparagine).

This sequence belongs to the peptidase M10A family. It depends on Zn(2+) as a cofactor. Requires Ca(2+) as cofactor. The precursor is cleaved by a furin endopeptidase. In terms of tissue distribution, identified in fetal brain, kidney and liver. In adult tissues found primarily in ovary, kidney, liver, lung, placenta, brain and peripheral blood leukocytes. Expressed as well in various cancer cell lines.

It localises to the secreted. Plays a specialized role in the generation of left-right asymmetry during embryogenesis. May act as a negative regulator of the NOTCH-signaling pathway. Cleaves alpha-1-antitrypsin. The sequence is that of Matrix metalloproteinase-21 (MMP21) from Homo sapiens (Human).